The primary structure comprises 316 residues: Olfactory receptor 10A7 (316 aa).

At 1–25 (MICENHTRVTEFILLGFTNNPEMQV) the chain is on the extracellular side. Residue asparagine 5 is glycosylated (N-linked (GlcNAc...) asparagine). The helical transmembrane segment at 26–46 (SLFIFFLAIYTVTLLGNFLIV) threads the bilayer. Residues 47–54 (TVTSVDLA) are Cytoplasmic-facing. Residues 55 to 75 (LQTPMYFFLQNLSLLEVCFTL) traverse the membrane as a helical segment. Over 76–99 (VMVPKMLVDLVSPRKIISFVGCGT) the chain is Extracellular. A helical transmembrane segment spans residues 100–120 (QMYFFFFFGSSECFLLSMMAY). Topologically, residues 121 to 139 (DRFVAICNPLHYSVIMNRS) are cytoplasmic. A helical transmembrane segment spans residues 140 to 160 (LCLWMAIGSWMSGVPVSMLQT). The Extracellular segment spans residues 161–197 (AWMMALPFCGPNAVDHFFCDGPPVLKLVTVDTTMYEM). A helical membrane pass occupies residues 198 to 217 (QALASTLLFIMFPFCLILVS). The Cytoplasmic segment spans residues 218-237 (YTRIIITILRMSSATGRQKA). A helical membrane pass occupies residues 238-258 (FSTCSSHLIVVSLFYGTASLT). The Extracellular portion of the chain corresponds to 259-271 (YLRPKSNQSPESK). The helical transmembrane segment at 272 to 292 (KLVSLSYTVITPMLNPIIYGL) threads the bilayer. The Cytoplasmic portion of the chain corresponds to 293–316 (RNNEVKGAVKRTITQKVLQKLDVF).

The protein belongs to the G-protein coupled receptor 1 family.

The protein resides in the cell membrane. Odorant receptor. This chain is Olfactory receptor 10A7 (OR10A7), found in Homo sapiens (Human).